Reading from the N-terminus, the 121-residue chain is Neuromedin-B (121 aa).

The first 24 residues, 1–24, serve as a signal peptide directing secretion; it reads MTLRAVGVRLLGGLLLFALLAAGA. Methionine 56 is subject to Methionine amide. Positions 60-121 are excised as a propeptide; that stretch reads SLEPPSPSLL…RRLLVQTLQK (62 aa). Residues 61–80 form a disordered region; the sequence is LEPPSPSLLGTAPHTSLRDQ.

It belongs to the bombesin/neuromedin-B/ranatensin family.

It localises to the secreted. Its subcellular location is the cell projection. The protein resides in the neuron projection. Its function is as follows. Stimulates smooth muscle contraction. Induces sighing by acting directly on the pre-Botzinger complex, a cluster of several thousand neurons in the ventrolateral medulla responsible for inspiration during respiratory activity. Contributes to the induction of sneezing following exposure to chemical irritants or allergens which causes release of NMB by nasal sensory neurons and activation of NMBR-expressing neurons in the sneeze-evoking region of the brainstem. These in turn activate neurons of the caudal ventral respiratory group, giving rise to the sneezing response. Contributes to induction of acute itch, possibly through activation of the NMBR receptor on dorsal root ganglion neurons. Increases expression of NMBR and steroidogenic mediators STAR, CYP11A1 and HSD3B1 in Leydig cells, induces secretion of testosterone by Leydig cells and also promotes Leydig cell proliferation. Plays a role in the innate immune response to influenza A virus infection by enhancing interferon alpha expression and reducing expression of IL6. Plays a role in CSF1-induced proliferation of osteoclast precursors by contributing to the positive regulation of the expression of the CSF1 receptor CSF1R. This is Neuromedin-B (NMB) from Bos taurus (Bovine).